A 56-amino-acid chain; its full sequence is Small ribosomal subunit protein uS14B (56 aa).

C21 and C24 together coordinate Zn(2+). The residue at position 25 (S25) is a Phosphoserine. Residues C39 and C42 each coordinate Zn(2+).

This sequence belongs to the universal ribosomal protein uS14 family. In terms of assembly, component of the small ribosomal subunit (SSU). Mature yeast ribosomes consist of a small (40S) and a large (60S) subunit. The 40S small subunit contains 1 molecule of ribosomal RNA (18S rRNA) and 33 different proteins (encoded by 57 genes). The large 60S subunit contains 3 rRNA molecules (25S, 5.8S and 5S rRNA) and 46 different proteins (encoded by 81 genes). Zn(2+) serves as cofactor.

Its subcellular location is the cytoplasm. Its function is as follows. Component of the ribosome, a large ribonucleoprotein complex responsible for the synthesis of proteins in the cell. The small ribosomal subunit (SSU) binds messenger RNAs (mRNAs) and translates the encoded message by selecting cognate aminoacyl-transfer RNA (tRNA) molecules. The large subunit (LSU) contains the ribosomal catalytic site termed the peptidyl transferase center (PTC), which catalyzes the formation of peptide bonds, thereby polymerizing the amino acids delivered by tRNAs into a polypeptide chain. The nascent polypeptides leave the ribosome through a tunnel in the LSU and interact with protein factors that function in enzymatic processing, targeting, and the membrane insertion of nascent chains at the exit of the ribosomal tunnel. The sequence is that of Small ribosomal subunit protein uS14B from Saccharomyces cerevisiae (strain ATCC 204508 / S288c) (Baker's yeast).